The following is a 275-amino-acid chain: Large ribosomal subunit protein uL2c (275 aa).

Disordered stretches follow at residues 1 to 28 (MGIRIYRSYTPGTRNRSSSDFSEITKSK) and 227 to 251 (PCDHPHGGGEGRSPIGRARPVTPWG). Residues 10–22 (TPGTRNRSSSDFS) are compositionally biased toward polar residues.

This sequence belongs to the universal ribosomal protein uL2 family. Part of the 50S ribosomal subunit.

It localises to the plastid. The protein resides in the chloroplast. The chain is Large ribosomal subunit protein uL2c (rpl2) from Rhodomonas salina (Cryptomonas salina).